The sequence spans 425 residues: Serine--tRNA ligase (425 aa).

230-232 (TAE) contacts L-serine. An ATP-binding site is contributed by 261 to 263 (RSE). L-serine is bound at residue Glu-284. ATP is bound at residue 348-351 (EISS). Residue Ser-384 coordinates L-serine.

The protein belongs to the class-II aminoacyl-tRNA synthetase family. Type-1 seryl-tRNA synthetase subfamily. As to quaternary structure, homodimer. The tRNA molecule binds across the dimer.

Its subcellular location is the cytoplasm. It catalyses the reaction tRNA(Ser) + L-serine + ATP = L-seryl-tRNA(Ser) + AMP + diphosphate + H(+). The catalysed reaction is tRNA(Sec) + L-serine + ATP = L-seryl-tRNA(Sec) + AMP + diphosphate + H(+). The protein operates within aminoacyl-tRNA biosynthesis; selenocysteinyl-tRNA(Sec) biosynthesis; L-seryl-tRNA(Sec) from L-serine and tRNA(Sec): step 1/1. Its function is as follows. Catalyzes the attachment of serine to tRNA(Ser). Is also able to aminoacylate tRNA(Sec) with serine, to form the misacylated tRNA L-seryl-tRNA(Sec), which will be further converted into selenocysteinyl-tRNA(Sec). The protein is Serine--tRNA ligase of Streptococcus pyogenes serotype M2 (strain MGAS10270).